The following is a 387-amino-acid chain: 8-amino-7-oxononanoate synthase (387 aa).

Positions 31 and 38 each coordinate substrate. A pyridoxal 5'-phosphate-binding site is contributed by G118 to Y119. H143 is a substrate binding site. Pyridoxal 5'-phosphate contacts are provided by residues S191, D216–H219, and T236–K239. K239 carries the N6-(pyridoxal phosphate)lysine modification. T348 is a binding site for substrate.

Belongs to the class-II pyridoxal-phosphate-dependent aminotransferase family. BioF subfamily. As to quaternary structure, homodimer. Pyridoxal 5'-phosphate is required as a cofactor.

The enzyme catalyses 6-carboxyhexanoyl-[ACP] + L-alanine + H(+) = (8S)-8-amino-7-oxononanoate + holo-[ACP] + CO2. The protein operates within cofactor biosynthesis; biotin biosynthesis. Catalyzes the decarboxylative condensation of pimeloyl-[acyl-carrier protein] and L-alanine to produce 8-amino-7-oxononanoate (AON), [acyl-carrier protein], and carbon dioxide. The sequence is that of 8-amino-7-oxononanoate synthase from Methylorubrum populi (strain ATCC BAA-705 / NCIMB 13946 / BJ001) (Methylobacterium populi).